The sequence spans 221 residues: GFP-like non-fluorescent chromoprotein (221 aa).

The 2-iminomethyl-5-imidazolinone (Gln-Gly) cross-link spans 62–64; sequence QYG. Residue Tyr-63 is modified to (E)-2,3-didehydrotyrosine.

Belongs to the GFP family. Homotetramer. Post-translationally, contains a chromophore consisting of modified amino acid residues. The chromophore is formed by autocatalytic backbone condensation between Xaa-N and Gly-(N+2), oxidation of Tyr-(N+1) to didehydrotyrosine, and formation of a double bond to the alpha-amino nitrogen of residue Xaa-N. Maturation of the chromophore requires nothing other than molecular oxygen.

Its function is as follows. Thought to play a role in photoprotection of the coral's resident symbiont microalgae's photosystems from photoinhibition caused by high light levels found near the surface of coral reefs. This Montipora efflorescens (Pore coral) protein is GFP-like non-fluorescent chromoprotein.